The primary structure comprises 512 residues: Pantothenate transporter FEN2 (512 aa).

The Cytoplasmic portion of the chain corresponds to 1-27 (MMKESKSITQHEVERESVSSKRAIKKR). A helical membrane pass occupies residues 28-48 (LLLFKIDLFVLSFVCLQYWIN). At 49 to 79 (YVDRVGFTNAYISGMKEDLKMVGNDLTVSNT) the chain is on the extracellular side. Residues 80 to 100 (VFMIGYIVGMVPNNLMLLCVP) traverse the membrane as a helical segment. Residues 101-102 (PR) are Cytoplasmic-facing. Residues 103-123 (IWLSFCTFAWGLLTLGMYKVT) traverse the membrane as a helical segment. The Extracellular segment spans residues 124–132 (SFKHICAIR). A helical membrane pass occupies residues 133 to 153 (FFQALFESCTFSGTHFVLGSW). At 154–164 (YKEDELPIRSA) the chain is on the cytoplasmic side. A helical membrane pass occupies residues 165 to 185 (IFTGSGLVGSMFSGFMQTSIF). Residues 186 to 198 (THLNGRNGLAGWR) lie on the Extracellular side of the membrane. A helical membrane pass occupies residues 199 to 219 (WLFIIDFCITLPIAIYGFIFF). Topologically, residues 220–271 (PGLPDQTSAVSKFSMTRYIFNEQELHYARRRLPARDESTRLDWSTIPRVLKR) are cytoplasmic. Residues 272–292 (WHWWMFSLVWVLGGENLGFAS) traverse the membrane as a helical segment. Topologically, residues 293–312 (NSTFALWLQNQKYTLAQRNN) are extracellular. A helical transmembrane segment spans residues 313–333 (YPSGIFAVGIVSTLCSAVYMS). Residues 334–342 (KIPRARHWH) are Cytoplasmic-facing. Residues 343–363 (VSVFISLVMVIVAVLIRADPL) form a helical membrane-spanning segment. Residues 364-372 (NPKVVFSAQ) lie on the Extracellular side of the membrane. The chain crosses the membrane as a helical span at residues 373 to 393 (YLGGVAYAGQAVFFSWANIIC). Topologically, residues 394-401 (HADLQERA) are cytoplasmic. The helical transmembrane segment at 402–422 (IVLASMNMFSGAVNAWWSILF) threads the bilayer. Topologically, residues 423–434 (FASDMVPKFERG) are extracellular. Residues 435–455 (CYALLATAISSGIVSVVIRSL) form a helical membrane-spanning segment. Over 456-512 (QIKENLSKKQVPYIDANDMPGEDDDDDNQDNENDGDDESMEVELHNEEMAEISNPFR) the chain is Cytoplasmic. A disordered region spans residues 468–512 (YIDANDMPGEDDDDDNQDNENDGDDESMEVELHNEEMAEISNPFR). Over residues 475–496 (PGEDDDDDNQDNENDGDDESME) the composition is skewed to acidic residues.

Belongs to the major facilitator superfamily. Allantoate permease family.

Its subcellular location is the cell membrane. Its function is as follows. Transports pantothenate into the cell. Also involved in the catabolite repression-mediated regulation of ergosterol biosynthesis and in fenpropimorph resistance. This chain is Pantothenate transporter FEN2 (FEN2), found in Saccharomyces cerevisiae (strain ATCC 204508 / S288c) (Baker's yeast).